Here is a 310-residue protein sequence, read N- to C-terminus: N-acetyl-gamma-glutamyl-phosphate reductase (310 aa).

Residue cysteine 117 is part of the active site.

It belongs to the NAGSA dehydrogenase family. Type 2 subfamily.

Its subcellular location is the cytoplasm. It carries out the reaction N-acetyl-L-glutamate 5-semialdehyde + phosphate + NADP(+) = N-acetyl-L-glutamyl 5-phosphate + NADPH + H(+). It functions in the pathway amino-acid biosynthesis; L-arginine biosynthesis; N(2)-acetyl-L-ornithine from L-glutamate: step 3/4. Its function is as follows. Catalyzes the NADPH-dependent reduction of N-acetyl-5-glutamyl phosphate to yield N-acetyl-L-glutamate 5-semialdehyde. The polypeptide is N-acetyl-gamma-glutamyl-phosphate reductase (Brucella abortus (strain S19)).